We begin with the raw amino-acid sequence, 817 residues long: MSVYGKIPSTSFEHENTFELSGDLLDPEELKSLGVSGRIIYVLRHLPFKSSINEETREWDLSGRRGATTMYSSMNWLANSTYWQTTLVGWTGVIPTVSEKEENKDAVTRLDSQDVKRFEETYSQWNSGERSTEYVPVWLPGPEKGSETIINETRSQQSRWLAYAENVIRPLIHYKYWPSSEVDENEEQWWRDYVKMNHAFADKICEIYKPGDFIIVQDYSLFLVPQLIRNKIDDAVIGFYHHHPFPSSEIARCFPRRRAILRSVLGADFIGFEDYSYARHFISCCSRVLDLEIGHDWVNLNGNKVTVRAITVGIDVPRIIRSSGNVSVSEKLEELNKRYENMKVILGRDRLDELYGVPQKLRSFQRFLRTYPEWRKKVVLIQITISSAFKHPKLLSSIKKLVQAINQEFGTDDYTPVHHVEEQLEPADYFALLTRADALFINSIREGVSNLALEYVVCQRDRYGMVLLSEFTATSAMLHDVPLINPWDYNECAEIISNALSTPLERRKMIERESYKQVTTHTMQSWTSSLIRSLANKLAATKTDQRIPTLTPEHALSVYSKASKRLFMMDYDGTLTPIVRDPNAAVPSKKLLDNLATLAADPKNQVWIISGRDQQFLRNWMDDIKGLGLSAEHGSFVRKPHSTTWINLAELLDMSWKKEVRRIFQYYTDRTQGSSIEEKRCAMTWHYRKADPENGAFQALECEALLEELVCSKYDVEIMRGKANLEVRPSSINKGGIVKQILSSYPEDSLPSFIFCAGDDRTDEDMFRSLHKNTRINKETSFAVTIGSDKKLSIADWCIADPANVIDILADLANFTN.

A glycosyltransferase region spans residues 1-547 (MSVYGKIPST…LAATKTDQRI (547 aa)).

It in the N-terminal section; belongs to the glycosyltransferase 20 family. This sequence in the C-terminal section; belongs to the trehalose phosphatase family. Component of the trehalose synthase complex that contains at least tps1, ntp1, and tpp1. Interacts with tps1. Interacts with ntp1. Requires Mg(2+) as cofactor.

The catalysed reaction is alpha,alpha-trehalose 6-phosphate + H2O = alpha,alpha-trehalose + phosphate. It functions in the pathway carbohydrate biosynthesis. Functionally, phosphatase catalytic subunit of the trehalose synthase complex that catalyzes the production of trehalose from glucose-6-phosphate and UDP-alpha-D-glucose in a two step process. The disaccharide trehalose serves as a storage carbohydrate that is mobilized during nutrient stress and spore germination. Together with ntp1, regulates the level of trehalose as a protectant for cell integrity during thermal, osmotic, and oxidative stress. This Schizosaccharomyces pombe (strain 972 / ATCC 24843) (Fission yeast) protein is Trehalose-phosphatase.